The primary structure comprises 118 residues: Large ribosomal subunit protein eL18 (118 aa).

This sequence belongs to the eukaryotic ribosomal protein eL18 family.

The polypeptide is Large ribosomal subunit protein eL18 (Sulfurisphaera tokodaii (strain DSM 16993 / JCM 10545 / NBRC 100140 / 7) (Sulfolobus tokodaii)).